Reading from the N-terminus, the 826-residue chain is Dolichyl-diphosphooligosaccharide--protein glycosyltransferase subunit STT3B (826 aa).

Positions M1–G60 are disordered. An N-acetylalanine modification is found at A2. The Cytoplasmic portion of the chain corresponds to A2–A41. S13, S18, and S29 each carry phosphoserine. The segment covering G37 to A49 has biased composition (low complexity). The chain crosses the membrane as a helical span at residues H42–S86. Over S87 to L173 the chain is Lumenal. Positions E101–D103 match the DXD motif 1 motif. D103 is a binding site for Mn(2+). A helical membrane pass occupies residues A174–L192. Residues W193–N194 are Cytoplasmic-facing. A helical transmembrane segment spans residues Q195–I212. At S213–E223 the chain is on the lumenal side. Residues D221 and E223 each coordinate Mn(2+). Positions D221–E223 match the DXD motif 2 motif. Residues G224–T243 form a helical membrane-spanning segment. The Cytoplasmic segment spans residues G244–S245. A helical membrane pass occupies residues V246–V260. At S261–G265 the chain is on the lumenal side. A helical transmembrane segment spans residues Y266 to L282. Over M283 to S287 the chain is Cytoplasmic. A helical transmembrane segment spans residues K288–F313. The Lumenal segment spans residues Q314–H321. A helical transmembrane segment spans residues M322–R341. Over D342–Q350 the chain is Cytoplasmic. The helical transmembrane segment at T351–L371 threads the bilayer. Over T372–T410 the chain is Lumenal. The short motif at S402 to E405 is the SVSE motif element. The chain crosses the membrane as a helical span at residues W411–I433. The Cytoplasmic segment spans residues K434 to E439. A helical membrane pass occupies residues R440–V456. Topologically, residues M457–L460 are lumenal. Position 459 (R459) interacts with dolichyl diphosphooligosaccharide. Residues M461 to H482 form a helical membrane-spanning segment. Residues Y483–K526 are Cytoplasmic-facing. The segment at R490–N509 is disordered. 2 positions are modified to phosphoserine: S498 and S499. A helical membrane pass occupies residues T527 to V552. Topologically, residues H553–V826 are lumenal. An interacts with target acceptor peptide in protein substrate region spans residues W604–D606. Positions W604–G608 match the WWDYG motif motif. Residue Y609 coordinates dolichyl diphosphooligosaccharide. Residues N616 and N623 are each glycosylated (N-linked (GlcNAc...) asparagine). N-linked (GlcNAc...) (high mannose) asparagine glycosylation is present at N627. A glycan (N-linked (GlcNAc...) asparagine) is linked at N641. The DK motif signature appears at D671–M678.

The protein belongs to the STT3 family. As to quaternary structure, component of the oligosaccharyltransferase (OST) complex. There are 2 OST complexes, OST-A and OST-B, which contain STT3A or STT3B as catalytic subunit, respectively. OST-A and OST-B contain common core subunits RPN1, RPN2, OST48, OST4, DAD1 and TMEM258, and OST-B contains either MAGT1 or TUSC3 as specific accessory subunit. Requires Mg(2+) as cofactor. Mn(2+) is required as a cofactor. Expressed in heart, brain, placenta, lung, liver, muscle, kidney and pancreas. Expressed in skin fibroblasts (at protein level).

The protein resides in the endoplasmic reticulum. Its subcellular location is the endoplasmic reticulum membrane. The catalysed reaction is a di-trans,poly-cis-dolichyl diphosphooligosaccharide + L-asparaginyl-[protein] = N(4)-(oligosaccharide-(1-&gt;4)-N-acetyl-beta-D-glucosaminyl-(1-&gt;4)-N-acetyl-beta-D-glucosaminyl)-L-asparaginyl-[protein] + a di-trans,poly-cis-dolichyl diphosphate + H(+). It functions in the pathway protein modification; protein glycosylation. Catalytic subunit of the oligosaccharyl transferase (OST) complex that catalyzes the initial transfer of a defined glycan (Glc(3)Man(9)GlcNAc(2) in eukaryotes) from the lipid carrier dolichol-pyrophosphate to an asparagine residue within an Asn-X-Ser/Thr consensus motif in nascent polypeptide chains, the first step in protein N-glycosylation. N-glycosylation occurs cotranslationally and the complex associates with the Sec61 complex at the channel-forming translocon complex that mediates protein translocation across the endoplasmic reticulum (ER). All subunits are required for a maximal enzyme activity. This subunit contains the active site and the acceptor peptide and donor lipid-linked oligosaccharide (LLO) binding pockets. STT3B is present in a small subset of OST complexes (OST-B) and mediates both cotranslational and post-translational N-glycosylation of target proteins: STT3B-containing complexes are required for efficient post-translational glycosylation and while they are less competent than STT3A-containing complexes for cotranslational glycosylation, they have the ability to mediate glycosylation of some nascent sites that are not accessible for STT3A. STT3B-containing complexes also act post-translationally and mediate modification of skipped glycosylation sites in unfolded proteins. Plays a role in ER-associated degradation (ERAD) pathway that mediates ubiquitin-dependent degradation of misfolded endoplasmic reticulum proteins by mediating N-glycosylation of unfolded proteins, which are then recognized by the ERAD pathway and targeted for degradation. Mediates glycosylation of the disease variant AMYL-TTR 'Asp-38' of TTR at 'Asn-118', leading to its degradation. This is Dolichyl-diphosphooligosaccharide--protein glycosyltransferase subunit STT3B from Homo sapiens (Human).